Reading from the N-terminus, the 536-residue chain is Phosphoenolpyruvate carboxykinase (ATP) (536 aa).

Substrate is bound by residues R61, Y195, and K201. ATP contacts are provided by residues K201, H220, and G236 to T244. Mn(2+)-binding residues include K201 and H220. Mn(2+) is bound at residue D257. E285, R322, and T447 together coordinate ATP. Position 322 (R322) interacts with substrate.

The protein belongs to the phosphoenolpyruvate carboxykinase (ATP) family. Mn(2+) is required as a cofactor.

Its subcellular location is the cytoplasm. The enzyme catalyses oxaloacetate + ATP = phosphoenolpyruvate + ADP + CO2. It functions in the pathway carbohydrate biosynthesis; gluconeogenesis. Its function is as follows. Involved in the gluconeogenesis. Catalyzes the conversion of oxaloacetate (OAA) to phosphoenolpyruvate (PEP) through direct phosphoryl transfer between the nucleoside triphosphate and OAA. This is Phosphoenolpyruvate carboxykinase (ATP) from Allorhizobium ampelinum (strain ATCC BAA-846 / DSM 112012 / S4) (Agrobacterium vitis (strain S4)).